Reading from the N-terminus, the 130-residue chain is Protein ApaG (130 aa).

One can recognise an ApaG domain in the interval 3–127 (SAVTRGIEVT…FSLDVPEQRR (125 aa)).

The chain is Protein ApaG from Brucella canis (strain ATCC 23365 / NCTC 10854 / RM-666).